The primary structure comprises 324 residues: Beta-ketoacyl-[acyl-carrier-protein] synthase III (324 aa).

Catalysis depends on residues Cys112 and His249. The ACP-binding stretch occupies residues 250–254 (QANRR). Residue Asn279 is part of the active site.

This sequence belongs to the thiolase-like superfamily. FabH family. In terms of assembly, homodimer.

It localises to the cytoplasm. It catalyses the reaction malonyl-[ACP] + acetyl-CoA + H(+) = 3-oxobutanoyl-[ACP] + CO2 + CoA. It participates in lipid metabolism; fatty acid biosynthesis. In terms of biological role, catalyzes the condensation reaction of fatty acid synthesis by the addition to an acyl acceptor of two carbons from malonyl-ACP. Catalyzes the first condensation reaction which initiates fatty acid synthesis and may therefore play a role in governing the total rate of fatty acid production. Possesses both acetoacetyl-ACP synthase and acetyl transacylase activities. Its substrate specificity determines the biosynthesis of branched-chain and/or straight-chain of fatty acids. This chain is Beta-ketoacyl-[acyl-carrier-protein] synthase III, found in Streptococcus pyogenes serotype M3 (strain ATCC BAA-595 / MGAS315).